The chain runs to 291 residues: 33 kDa chaperonin (291 aa).

2 disulfide bridges follow: Cys-235/Cys-237 and Cys-268/Cys-271.

It belongs to the HSP33 family. Post-translationally, under oxidizing conditions two disulfide bonds are formed involving the reactive cysteines. Under reducing conditions zinc is bound to the reactive cysteines and the protein is inactive.

It localises to the cytoplasm. Its function is as follows. Redox regulated molecular chaperone. Protects both thermally unfolding and oxidatively damaged proteins from irreversible aggregation. Plays an important role in the bacterial defense system toward oxidative stress. This is 33 kDa chaperonin from Bacillus pumilus (strain SAFR-032).